Reading from the N-terminus, the 304-residue chain is tRNA pseudouridine synthase B (304 aa).

The active-site Nucleophile is Asp-38.

Belongs to the pseudouridine synthase TruB family. Type 1 subfamily.

It carries out the reaction uridine(55) in tRNA = pseudouridine(55) in tRNA. Functionally, responsible for synthesis of pseudouridine from uracil-55 in the psi GC loop of transfer RNAs. This is tRNA pseudouridine synthase B from Listeria monocytogenes serovar 1/2a (strain ATCC BAA-679 / EGD-e).